The following is a 515-amino-acid chain: C-glycoside 3-oxidase (515 aa).

Residue Glu-41 coordinates FAD. Positions 62–82 are enriched in basic and acidic residues; it reads ERAHAQRRSEGPHAREDDDRV. The disordered stretch occupies residues 62–90; that stretch reads ERAHAQRRSEGPHAREDDDRVGGIVKSAQ. 6 residues coordinate FAD: Ser-118, Asn-120, Met-124, Thr-129, Ala-131, and Val-237. His-444 (proton acceptor) is an active-site residue. Residues Asn-478 and Thr-490 each coordinate FAD.

Belongs to the GMC oxidoreductase family. As to quaternary structure, monomer. It depends on FAD as a cofactor.

It catalyses the reaction isoorientin + O2 = 3''-dehydroisoorientin + H2O2. It carries out the reaction mangiferin + O2 = 3'-dehydromangiferin + H2O2. FAD-dependent C-glycoside-metabolizing enzyme that participates in the degradation of certain C-glycosides by catalyzing the oxidation of the hydroxyl group at the C3 position of the sugar moiety. Shows oxidase activity toward C-glycosides such as isoorientin and mangiferin but cannot use carminic acid, puerarin, orientin or aloesin. Shows weak activity (100 to 1000-fold lower) with O-glycosides. Probably plays a crucial role in the metabolism of C-glycosides in nature. The sequence is that of C-glycoside 3-oxidase from Microbacterium trichothecenolyticum (Aureobacterium trichothecenolyticum).